We begin with the raw amino-acid sequence, 990 residues long: Putative ariadne-like RING finger protein R811 (990 aa).

Residues 8-201 (DLAIVVDATG…IITQTTIKLL (194 aa)) enclose the VWFA domain. The segment at 797 to 990 (EKGLCMICFN…GGAFEYDQDD (194 aa)) is TRIAD supradomain. The Zn(2+) site is built by Cys801, Cys804, Cys827, and Cys830. The RING-type 1 zinc finger occupies 801–854 (CMICFNEFSKSNLRQICGRKVCQSVACYDCMKSWYGENKVGDLIHVNALTCPFC). The IBR-type zinc finger occupies 855–903 (KQCPMFNILAAFNRQVCAMVRTNNSFDIDWWYGWCLKCFQPKKVVEKEC). Cys930 and Cys935 together coordinate Zn(2+). The RING-type 2; atypical zinc-finger motif lies at 930–961 (CPNSLCKIPIIKDGGCNHMECTACKKHFCWLC). The active site involves Cys945. Zn(2+) contacts are provided by Cys950 and Cys953.

The chain is Putative ariadne-like RING finger protein R811 from Acanthamoeba polyphaga (Amoeba).